Here is a 964-residue protein sequence, read N- to C-terminus: SKI family transcriptional corepressor 1 (964 aa).

Disordered regions lie at residues 45-72 (TQLGPGREGSSSPNSKQELQPYSGSSAL), 278-365 (RTFS…GGSA), 414-461 (AGEP…WGHQ), 525-587 (AGGG…RKSS), 610-768 (REAY…GAAK), and 794-842 (LCTP…EDGL). The span at 283 to 310 (QGGGGGGANSGSGGAGKGGAGGGGGPGC) shows a compositional bias: gly residues. Over residues 345-355 (ALGLAAAASGP) the composition is skewed to low complexity. 2 stretches are compositionally biased toward gly residues: residues 356-365 (AGPGGPGGSA) and 417-440 (PKGGPGTGSSGGAGTAAGAGGPGA). Over residues 571–583 (SLGPLPPPPPPPA) the composition is skewed to pro residues. The span at 652–661 (DTADEPEVDV) shows a compositional bias: acidic residues. A compositionally biased stretch (basic and acidic residues) spans 798-808 (ETHEPDKEDNH). Residues 823 to 834 (DQRSVSQPSPAN) are compositionally biased toward polar residues. Positions 853-921 (EKDIENLARE…DTLCNELDQE (69 aa)) form a coiled coil.

Belongs to the SKI family. As to quaternary structure, interacts with SMAD1, SMAD2 and SMAD3. Interacts with LBX1. As to expression, expressed in brain with higher levels in embryo than adult. Expressed by migratory precursors of Purkinje cells in the postnatal brain. Also expressed in adult testis.

It is found in the nucleus. Its function is as follows. Inhibits BMP signaling. Acts as a transcriptional corepressor of LBX1. This Mus musculus (Mouse) protein is SKI family transcriptional corepressor 1 (Skor1).